We begin with the raw amino-acid sequence, 72 residues long: MPRKTETYKSIMLKLENIVASMDSSELSLENSLKSYEEGVKLCNKLYKILNEAEEKIKVLTEEGERDFDIES.

The protein belongs to the XseB family. As to quaternary structure, heterooligomer composed of large and small subunits.

The protein localises to the cytoplasm. The catalysed reaction is Exonucleolytic cleavage in either 5'- to 3'- or 3'- to 5'-direction to yield nucleoside 5'-phosphates.. Bidirectionally degrades single-stranded DNA into large acid-insoluble oligonucleotides, which are then degraded further into small acid-soluble oligonucleotides. The protein is Exodeoxyribonuclease 7 small subunit of Clostridium kluyveri (strain NBRC 12016).